An 837-amino-acid chain; its full sequence is ABC transporter A family member 8 (837 aa).

The next 7 membrane-spanning stretches (helical) occupy residues 29–49 (YFST…FYII), 244–264 (VVSL…FIFL), 303–323 (LIIC…FFLG), 326–346 (FLVL…MAFF), 356–376 (VAIG…LTFN), 393–413 (GAAF…SKVL), and 455–475 (LAYM…IEYA). Residues 516–750 (IRGLSKTFNK…YGEGYSVQVI (235 aa)) form the ABC transporter domain. 553–560 (GSNGAGKS) is a binding site for ATP.

The protein belongs to the ABC transporter superfamily. ABCA family.

It is found in the membrane. The polypeptide is ABC transporter A family member 8 (abcA8) (Dictyostelium discoideum (Social amoeba)).